The sequence spans 228 residues: Phosphatidylserine decarboxylase proenzyme (228 aa).

The Schiff-base intermediate with substrate; via pyruvic acid role is filled by S197. S197 bears the Pyruvic acid (Ser); by autocatalysis mark.

The protein belongs to the phosphatidylserine decarboxylase family. PSD-A subfamily. Heterodimer of a large membrane-associated beta subunit and a small pyruvoyl-containing alpha subunit. It depends on pyruvate as a cofactor. In terms of processing, is synthesized initially as an inactive proenzyme. Formation of the active enzyme involves a self-maturation process in which the active site pyruvoyl group is generated from an internal serine residue via an autocatalytic post-translational modification. Two non-identical subunits are generated from the proenzyme in this reaction, and the pyruvate is formed at the N-terminus of the alpha chain, which is derived from the carboxyl end of the proenzyme. The post-translation cleavage follows an unusual pathway, termed non-hydrolytic serinolysis, in which the side chain hydroxyl group of the serine supplies its oxygen atom to form the C-terminus of the beta chain, while the remainder of the serine residue undergoes an oxidative deamination to produce ammonia and the pyruvoyl prosthetic group on the alpha chain.

Its subcellular location is the cell membrane. It catalyses the reaction a 1,2-diacyl-sn-glycero-3-phospho-L-serine + H(+) = a 1,2-diacyl-sn-glycero-3-phosphoethanolamine + CO2. Its pathway is phospholipid metabolism; phosphatidylethanolamine biosynthesis; phosphatidylethanolamine from CDP-diacylglycerol: step 2/2. In terms of biological role, catalyzes the formation of phosphatidylethanolamine (PtdEtn) from phosphatidylserine (PtdSer). This is Phosphatidylserine decarboxylase proenzyme from Bacteroides thetaiotaomicron (strain ATCC 29148 / DSM 2079 / JCM 5827 / CCUG 10774 / NCTC 10582 / VPI-5482 / E50).